A 244-amino-acid chain; its full sequence is Recombination directionality factor (244 aa).

The segment at 1–34 (MAKRSIWAGDEDNKPKKRETYADDTVGRFHSGYS) is disordered. Basic and acidic residues predominate over residues 11 to 27 (EDNKPKKRETYADDTVG).

Interacts with the integrase.

Recombination directionality factor that interacts directly with the integrase tetramer to activate excision and inhibit integration. This chain is Recombination directionality factor, found in Streptomyces coelicolor (Bacteriophage phi-C31).